The sequence spans 184 residues: ATP synthase subunit b, chloroplastic (184 aa).

A helical transmembrane segment spans residues 31–53 (LINLSVVLGVLIYFGKGVLSNLL).

This sequence belongs to the ATPase B chain family. As to quaternary structure, F-type ATPases have 2 components, F(1) - the catalytic core - and F(0) - the membrane proton channel. F(1) has five subunits: alpha(3), beta(3), gamma(1), delta(1), epsilon(1). F(0) has four main subunits: a(1), b(1), b'(1) and c(10-14). The alpha and beta chains form an alternating ring which encloses part of the gamma chain. F(1) is attached to F(0) by a central stalk formed by the gamma and epsilon chains, while a peripheral stalk is formed by the delta, b and b' chains.

The protein localises to the plastid. It localises to the chloroplast thylakoid membrane. In terms of biological role, f(1)F(0) ATP synthase produces ATP from ADP in the presence of a proton or sodium gradient. F-type ATPases consist of two structural domains, F(1) containing the extramembraneous catalytic core and F(0) containing the membrane proton channel, linked together by a central stalk and a peripheral stalk. During catalysis, ATP synthesis in the catalytic domain of F(1) is coupled via a rotary mechanism of the central stalk subunits to proton translocation. Component of the F(0) channel, it forms part of the peripheral stalk, linking F(1) to F(0). The polypeptide is ATP synthase subunit b, chloroplastic (Cycas taitungensis (Prince sago)).